A 338-amino-acid chain; its full sequence is Ketol-acid reductoisomerase (NADP(+)) (338 aa).

In terms of domain architecture, KARI N-terminal Rossmann spans 1–181 (MKVYYDKDAD…GGTKGGVIET (181 aa)). NADP(+)-binding positions include 24–27 (YGSQ), arginine 47, and serine 52. Histidine 107 is an active-site residue. Glycine 133 contacts NADP(+). One can recognise a KARI C-terminal knotted domain in the interval 182-327 (NFREETETDL…SQLRAMMPWI (146 aa)). Mg(2+) contacts are provided by aspartate 190, glutamate 194, glutamate 226, and glutamate 230. A substrate-binding site is contributed by serine 251.

The protein belongs to the ketol-acid reductoisomerase family. The cofactor is Mg(2+).

The catalysed reaction is (2R)-2,3-dihydroxy-3-methylbutanoate + NADP(+) = (2S)-2-acetolactate + NADPH + H(+). The enzyme catalyses (2R,3R)-2,3-dihydroxy-3-methylpentanoate + NADP(+) = (S)-2-ethyl-2-hydroxy-3-oxobutanoate + NADPH + H(+). It participates in amino-acid biosynthesis; L-isoleucine biosynthesis; L-isoleucine from 2-oxobutanoate: step 2/4. The protein operates within amino-acid biosynthesis; L-valine biosynthesis; L-valine from pyruvate: step 2/4. In terms of biological role, involved in the biosynthesis of branched-chain amino acids (BCAA). Catalyzes an alkyl-migration followed by a ketol-acid reduction of (S)-2-acetolactate (S2AL) to yield (R)-2,3-dihydroxy-isovalerate. In the isomerase reaction, S2AL is rearranged via a Mg-dependent methyl migration to produce 3-hydroxy-3-methyl-2-ketobutyrate (HMKB). In the reductase reaction, this 2-ketoacid undergoes a metal-dependent reduction by NADPH to yield (R)-2,3-dihydroxy-isovalerate. This is Ketol-acid reductoisomerase (NADP(+)) from Methylobacillus flagellatus (strain ATCC 51484 / DSM 6875 / VKM B-1610 / KT).